The primary structure comprises 727 residues: Glycerol-3-phosphate dehydrogenase, mitochondrial (727 aa).

A mitochondrion-targeting transit peptide spans 1 to 42; that stretch reads MAFQKAVKGTILVGGGALATVLGLSHFAHYKRKQVNLAFVEA. Residue 71-99 participates in FAD binding; sequence DVLVIGGGATGSGCALDAVTRGLKTALVE. The residue at position 601 (Y601) is a Phosphotyrosine. EF-hand domains are found at residues 623–658 and 659–694; these read SDIDRYKKRFHKFDADQKGFITIVDVQRVLESIGVQ and MDENTLHEILNEVDLNKNGQVELNEFLQLMSAIQKG. Ca(2+)-binding residues include D672, N674, N676, Q678, and E683.

The protein belongs to the FAD-dependent glycerol-3-phosphate dehydrogenase family. Requires FAD as cofactor.

It localises to the mitochondrion. It carries out the reaction a quinone + sn-glycerol 3-phosphate = dihydroxyacetone phosphate + a quinol. Its pathway is polyol metabolism; glycerol degradation via glycerol kinase pathway; glycerone phosphate from sn-glycerol 3-phosphate (aerobic route): step 1/1. Calcium-binding enhance the activity of the enzyme. Its function is as follows. Calcium-responsive mitochondrial glycerol-3-phosphate dehydrogenase which seems to be a key component of the pancreatic beta-cell glucose-sensing device. The sequence is that of Glycerol-3-phosphate dehydrogenase, mitochondrial (GPD2) from Bos taurus (Bovine).